The sequence spans 781 residues: Death domain-containing protein 1 (781 aa).

ZU5 domains follow at residues isoleucine 167–leucine 301 and lysine 302–leucine 483. Residues aspartate 679–tryptophan 764 enclose the Death domain.

This is Death domain-containing protein 1 (DTHD1) from Homo sapiens (Human).